The sequence spans 571 residues: Ferroportin (571 aa).

The Cytoplasmic portion of the chain corresponds to 1 to 23 (MTRAGDHNRQRGCCGSLADYLTS). Residues 24 to 53 (AKFLLYLGHSLSTWGDRMWHFAVSVFLVEL) form a helical membrane-spanning segment. Asp-39 and His-43 together coordinate Fe cation. Topologically, residues 54–57 (YGNS) are extracellular. Residues 58–84 (LLLTAVYGLVVAGSVLVLGAIIGDWVD) traverse the membrane as a helical segment. Over 85–87 (KNA) the chain is Cytoplasmic. Residues 88-118 (RLKVAQTSLVVQNVSVILCGIILMMVFLHKH) form a helical membrane-spanning segment. At 119–126 (ELLTMYHG) the chain is on the extracellular side. A helical transmembrane segment spans residues 127–162 (WVLTSCYILIITIANIANLASTATAITIQRDWIVVV). Topologically, residues 163 to 164 (AG) are cytoplasmic. Residues 165–195 (EDRSKLANMNATIRRIDQLTNILAPMAVGQI) form a helical membrane-spanning segment. At 196–202 (MTFGSPV) the chain is on the extracellular side. The chain crosses the membrane as a helical span at residues 203–229 (IGCGFISGWNLVSMCVEYVLLWKVYQK). Over 230–306 (TPALAVKAGL…DGWVSYYNQP (77 aa)) the chain is Cytoplasmic. Residues 307 to 333 (VFLAGMGLAFLYMTVLGFDCITTGYAY) traverse the membrane as a helical segment. Cys-326 contributes to the Fe cation binding site. Residues 334–338 (TQGLS) are Extracellular-facing. Residues 339–366 (GSILSILMGASAITGIMGTVAFTWLRRK) traverse the membrane as a helical segment. At 367–368 (CG) the chain is on the cytoplasmic side. A helical membrane pass occupies residues 369–391 (LVRTGLISGLAQLSCLILCVISV). Over 392-453 (FMPGSPLDLS…ETSPESVPII (62 aa)) the chain is Extracellular. N-linked (GlcNAc...) asparagine glycosylation is present at Asn-434. The helical transmembrane segment at 454–483 (SVSLLFAGVIAARIGLWSFDLTVTQLLQEN) threads the bilayer. At 484–488 (VIESE) the chain is on the cytoplasmic side. A helical transmembrane segment spans residues 489–513 (RGIINGVQNSMNYLLDLLHFIMVIL). His-507 lines the Fe cation pocket. At 514–516 (APN) the chain is on the extracellular side. A helical transmembrane segment spans residues 517-542 (PEAFGLLVLISVSFVAMGHIMYFRFA). The Cytoplasmic segment spans residues 543–571 (QNTLGNKLFACGPDAKEVRKENQANTSVV).

Belongs to the ferroportin (FP) (TC 2.A.100) family. SLC40A subfamily. Identified in a complex with STOM. Interacts with HAMP; affinity of the peptide hormone HAMP for SLC40A1 increases by 80-fold in the presence of iron and the interaction promotes SLC40A1 ubiquitination and degradation. Part of a complex composed of SLC40A1/ferroportin, TF/transferrin and HEPH/hephaestin that transfers iron from cells to transferrin. Polyubiquitinated by RNF217; leading to proteasomal degradation. Under conditions of high systemic iron levels, both the hormone peptide hepcidin/HAMP and holo(iron bound)-transferrin/TF induce the ubiquitination, internalization and proteasomal degradation of SLC40A1 to control iron release from cells. Detected in erythrocytes (at protein level). Expressed in placenta, intestine, muscle and spleen. Highly expressed in mature red blood.

Its subcellular location is the cell membrane. It is found in the basolateral cell membrane. The catalysed reaction is Fe(2+)(in) = Fe(2+)(out). In terms of biological role, transports Fe(2+) from the inside of a cell to the outside of the cell, playing a key role for maintaining systemic iron homeostasis. Transports iron from intestinal, splenic, hepatic cells, macrophages and erythrocytes into the blood to provide iron to other tissues. Controls therefore dietary iron uptake, iron recycling by macrophages and erythrocytes, and release of iron stores in hepatocytes. When iron is in excess in serum, circulating HAMP/hepcidin levels increase resulting in a degradation of SLC40A1, thus limiting the iron efflux to plasma. The sequence is that of Ferroportin from Homo sapiens (Human).